The chain runs to 406 residues: MANVLDTLMERGYIKQFTHEAETRELLEKEKVTFYIGFDPTADSLHVGHFIAMMFMAHMQKAGHRPIALIGGGTATIGDPSGKTDMRKMMTNETIAHNVACIKKQMEKFIDFSDDKAILVNNADWLLNQNYVEFLREVGVHFSVNRMLSAECFKQRLERGLSFLEFNYMLMQGYDFYVLNKKYNCKMELGGDDQWSNMIAGVELVRKKSQKSAYAMTCTLLTNSEGQKMGKTVNGALWLDPEKTSPYEFYQYWRNVNDADVEKCLKLLTFIPMDEVRRLSSLEGSQINEAKKVLAFEVTKLVHGEEEATKAKQAAEALFGKGGDMSNVPTYEMGKDKLGSELLDILVEAEIVPSKAEGKRLVKQGGLSLNGEKVADFKKTLEEADFENGEVLIKRGKKNYNKIVLA.

An L-tyrosine-binding site is contributed by Tyr35. Residues 40-49 carry the 'HIGH' region motif; sequence PTADSLHVGH. The L-tyrosine site is built by Tyr168 and Gln172. The short motif at 228 to 232 is the 'KMSKS' region element; that stretch reads KMGKT. Lys231 provides a ligand contact to ATP. Positions 340–404 constitute an S4 RNA-binding domain; the sequence is SELLDILVEA…RGKKNYNKIV (65 aa).

Belongs to the class-I aminoacyl-tRNA synthetase family. TyrS type 1 subfamily. Homodimer.

It is found in the cytoplasm. The enzyme catalyses tRNA(Tyr) + L-tyrosine + ATP = L-tyrosyl-tRNA(Tyr) + AMP + diphosphate + H(+). In terms of biological role, catalyzes the attachment of tyrosine to tRNA(Tyr) in a two-step reaction: tyrosine is first activated by ATP to form Tyr-AMP and then transferred to the acceptor end of tRNA(Tyr). The protein is Tyrosine--tRNA ligase of Clostridium perfringens (strain SM101 / Type A).